The chain runs to 117 residues: UPF0295 protein YgzB (117 aa).

The next 2 membrane-spanning stretches (helical) occupy residues 13 to 33 (TFAL…IFFK) and 41 to 61 (LFMI…FWIG).

This sequence belongs to the UPF0295 family.

It localises to the cell membrane. This Bacillus subtilis (strain 168) protein is UPF0295 protein YgzB (ygzB).